We begin with the raw amino-acid sequence, 181 residues long: Protein AC41 (181 aa).

Its function is as follows. Plays a role in late gene expression. In Autographa californica nuclear polyhedrosis virus (AcMNPV), this protein is Protein AC41 (AC41).